The following is a 405-amino-acid chain: Tryptophan synthase beta chain (405 aa).

The residue at position 98 (Lys98) is an N6-(pyridoxal phosphate)lysine.

This sequence belongs to the TrpB family. As to quaternary structure, tetramer of two alpha and two beta chains. Requires pyridoxal 5'-phosphate as cofactor.

The enzyme catalyses (1S,2R)-1-C-(indol-3-yl)glycerol 3-phosphate + L-serine = D-glyceraldehyde 3-phosphate + L-tryptophan + H2O. The protein operates within amino-acid biosynthesis; L-tryptophan biosynthesis; L-tryptophan from chorismate: step 5/5. Functionally, the beta subunit is responsible for the synthesis of L-tryptophan from indole and L-serine. The chain is Tryptophan synthase beta chain from Methylococcus capsulatus (strain ATCC 33009 / NCIMB 11132 / Bath).